Here is a 469-residue protein sequence, read N- to C-terminus: RNA-editing ligase 1, mitochondrial (469 aa).

The transit peptide at 1 to 44 (MQLQRLGAPLLKRLVGGCIRQSTAPIMPCVVVSGSGVFLTPVRT) directs the protein to the mitochondrion. Residues 59-61 (IEI), 86-92 (EKVHGTN), arginine 111, glutamate 159, phenylalanine 209, and 307-309 (KLR) contribute to the ATP site. Catalysis depends on lysine 87, which acts as the N6-AMP-lysine intermediate. The interval 450–469 (AAAQSEAIPPLSPAAPTKGE) is disordered.

Belongs to the RNA ligase 2 family. Component of the RNA editing complex (editosome), a 1600 kDa complex composed of at least 20 proteins. Interacts with terminal uridylyltransferase MEAT1.

The protein localises to the mitochondrion. The catalysed reaction is ATP + (ribonucleotide)n-3'-hydroxyl + 5'-phospho-(ribonucleotide)m = (ribonucleotide)n+m + AMP + diphosphate.. Its function is as follows. Essential for RNA editing. RNA editing in kinetoplastid mitochondria inserts and deletes uridylates at multiple sites in pre-mRNAs as directed by guide RNAs. This is RNA-editing ligase 1, mitochondrial (REL1) from Trypanosoma brucei brucei.